The chain runs to 436 residues: Eukaryotic translation initiation factor 4B (436 aa).

A disordered region spans residues 56-98 (AKNNSNNTRSGGFGGSFGGRSRLDPALGGGSSDRREEYPVPDA). Residues Ser-65 and Ser-71 each carry the phosphoserine modification. The region spanning 101–183 (YRAVINNIPW…RTVYVSVAAP (83 aa)) is the RRM domain. Residues 185 to 406 (RGGGADVDWS…EKQNGDAKEN (222 aa)) are disordered. Residues 190–210 (DVDWSSARGSNFQGDGREDAP) form a 1; approximate repeat. The interval 190-350 (DVDWSSARGS…DWGAARGAQF (161 aa)) is 7 X approximate tandem repeats. Repeat copies occupy residues 211–232 (DLDWGAARGSNFRGPRREREEV), 233–258 (DIDWTAARGSNFQGSSRPPRREREEV), 259–284 (DIDWSAARGSNFQGSSRPPRREREEP), 285–310 (DIDWSAARGSNFQSSSRPPRREREEP), and 311–340 (DIDWSAARGSNFQSSSRPPRREREKEEPAL). Basic and acidic residues predominate over residues 329-338 (PRREREKEEP). The 7; truncated repeat unit spans residues 341-350 (DWGAARGAQF). Composition is skewed to basic and acidic residues over residues 359–376 (TYKDRSLTNKKTTDEQPK) and 397–406 (EKQNGDAKEN).

Functionally, involved in translation initiation. May be the homolog of mammalian eIF4B and be part of an RNA helicase. STM1/TIF3 is a non-essential gene. The protein is Eukaryotic translation initiation factor 4B (TIF3) of Saccharomyces cerevisiae (strain ATCC 204508 / S288c) (Baker's yeast).